The primary structure comprises 136 residues: Photosystem II extrinsic protein U (136 aa).

Positions Met1–Ala28 are cleaved as a signal peptide.

Belongs to the PsbU family. PSII is composed of 1 copy each of membrane proteins PsbA, PsbB, PsbC, PsbD, PsbE, PsbF, PsbH, PsbI, PsbJ, PsbK, PsbL, PsbM, PsbT, PsbX, PsbY, PsbZ, Psb30/Ycf12, peripheral proteins PsbO, CyanoQ (PsbQ), PsbU, PsbV and a large number of cofactors. It forms dimeric complexes.

The protein localises to the cellular thylakoid membrane. In terms of biological role, one of the extrinsic, lumenal subunits of photosystem II (PSII). PSII is a light-driven water plastoquinone oxidoreductase, using light energy to abstract electrons from H(2)O, generating a proton gradient subsequently used for ATP formation. The extrinsic proteins stabilize the structure of photosystem II oxygen-evolving complex (OEC), the ion environment of oxygen evolution and protect the OEC against heat-induced inactivation. This chain is Photosystem II extrinsic protein U, found in Synechococcus elongatus (strain ATCC 33912 / PCC 7942 / FACHB-805) (Anacystis nidulans R2).